Consider the following 381-residue polypeptide: Beta-lactamase CMY-2 (381 aa).

A signal peptide spans 1 to 20 (MMKKSLCCALLLTASFSTFA). The Acyl-ester intermediate role is filled by Ser84. A beta-lactam-binding residues include Ser84, Gln140, Tyr170, and Asn172.

The protein belongs to the class-C beta-lactamase family.

It catalyses the reaction a beta-lactam + H2O = a substituted beta-amino acid. With respect to regulation, inhibited by the beta-lactamase-blocking agents sulbactam, tazobactam, avibactam and 3-aminophenylboronic acid (APB). Functionally, class C beta-lactamase which confers resistance to penicillins and cephalosporins. Has nitrocefin-, cefoxitin- and cefoperazone-hydrolyzing activities. This Klebsiella pneumoniae protein is Beta-lactamase CMY-2.